Consider the following 435-residue polypeptide: GTPase Obg (435 aa).

The 158-residue stretch at methionine 1–leucine 158 folds into the Obg domain. The region spanning alanine 159–alanine 336 is the OBG-type G domain. Residues glycine 165–serine 172, phenylalanine 190–valine 194, aspartate 212–glycine 215, asparagine 282–aspartate 285, and serine 317–leucine 319 contribute to the GTP site. Mg(2+) is bound by residues serine 172 and threonine 192. Residues glycine 357–aspartate 435 form the OCT domain.

Belongs to the TRAFAC class OBG-HflX-like GTPase superfamily. OBG GTPase family. Monomer. It depends on Mg(2+) as a cofactor.

It localises to the cytoplasm. An essential GTPase which binds GTP, GDP and possibly (p)ppGpp with moderate affinity, with high nucleotide exchange rates and a fairly low GTP hydrolysis rate. Plays a role in control of the cell cycle, stress response, ribosome biogenesis and in those bacteria that undergo differentiation, in morphogenesis control. In Streptococcus equi subsp. zooepidemicus (strain MGCS10565), this protein is GTPase Obg.